The primary structure comprises 111 residues: MNAHKERLESNLLELLQEALASLNDSELNSLSVTRVECSKGKHHAFVFVLSQDHKILSKLKKAEGLIRQFVLQASGWFKCPKLSFVLDNSLEKQLRLDAIFNEIAKGKDND.

It belongs to the RbfA family. In terms of assembly, monomer. Binds 30S ribosomal subunits, but not 50S ribosomal subunits or 70S ribosomes.

The protein resides in the cytoplasm. In terms of biological role, one of several proteins that assist in the late maturation steps of the functional core of the 30S ribosomal subunit. Associates with free 30S ribosomal subunits (but not with 30S subunits that are part of 70S ribosomes or polysomes). Required for efficient processing of 16S rRNA. May interact with the 5'-terminal helix region of 16S rRNA. The chain is Ribosome-binding factor A from Helicobacter pylori (strain Shi470).